The chain runs to 288 residues: tRNA dimethylallyltransferase (288 aa).

ATP is bound at residue 2–9; sequence GPTAAGKS. Substrate is bound at residue 4-9; sequence TAAGKS. The interaction with substrate tRNA stretch occupies residues 27–30; the sequence is DSMQ.

It belongs to the IPP transferase family. As to quaternary structure, monomer. Mg(2+) is required as a cofactor.

It catalyses the reaction adenosine(37) in tRNA + dimethylallyl diphosphate = N(6)-dimethylallyladenosine(37) in tRNA + diphosphate. Functionally, catalyzes the transfer of a dimethylallyl group onto the adenine at position 37 in tRNAs that read codons beginning with uridine, leading to the formation of N6-(dimethylallyl)adenosine (i(6)A). This is tRNA dimethylallyltransferase from Frankia alni (strain DSM 45986 / CECT 9034 / ACN14a).